We begin with the raw amino-acid sequence, 204 residues long: Sperm acrosome developmental regulator (204 aa).

Phosphoserine is present on serine 65. Residues 172-184 (RRQERRRRHHLRA) show a composition bias toward basic residues. The interval 172 to 204 (RRQERRRRHHLRAHMGPQPDPAQGLKQDARSPL) is disordered.

Its subcellular location is the cytoplasmic vesicle. The protein localises to the secretory vesicle. It localises to the acrosome. In terms of biological role, may play an important role in acrosome formation and nucleus shaping during spermiogenesis. This is Sperm acrosome developmental regulator (SPACDR) from Bos taurus (Bovine).